Consider the following 397-residue polypeptide: Putative F-box protein At2g04810 (397 aa).

Residues 20–68 (SDWSKLCPDVLRKIYETLRSPVDSHRAKIVCSNWYSVWKTCVKRPLCPL) form the F-box domain.

This Arabidopsis thaliana (Mouse-ear cress) protein is Putative F-box protein At2g04810.